The following is a 495-amino-acid chain: Homeobox protein ceh-21 (495 aa).

Over residues Met1–Ala14 the composition is skewed to polar residues. Disordered stretches follow at residues Met1–Glu24 and Thr89–Glu267. The span at Leu106–Ser120 shows a compositional bias: basic and acidic residues. A compositionally biased stretch (acidic residues) spans Asn132 to Ala145. A compositionally biased stretch (basic and acidic residues) spans Ser149–Glu162. 2 stretches are compositionally biased toward polar residues: residues Ser163–Lys179 and Thr199–Ala217. Positions Ser218–Ser233 are enriched in low complexity. Over residues Arg242–Pro254 the composition is skewed to basic and acidic residues. The segment at residues Asn284–Lys370 is a DNA-binding region (CUT). Positions Lys389–Asp449 form a DNA-binding region, homeobox. Residues Gln450–Asp473 are disordered. The segment covering Asp464–Asp473 has biased composition (acidic residues).

Belongs to the CUT homeobox family.

It is found in the nucleus. Functionally, probable DNA-binding regulatory protein involved in cell-fate specification. The polypeptide is Homeobox protein ceh-21 (ceh-21) (Caenorhabditis elegans).